The following is a 710-amino-acid chain: Probable thimet oligopeptidase (710 aa).

His502 contacts Zn(2+). Residue Glu503 is part of the active site. His506 is a Zn(2+) binding site.

This sequence belongs to the peptidase M3 family. Zn(2+) is required as a cofactor.

It is found in the cytoplasm. It carries out the reaction Preferential cleavage of bonds with hydrophobic residues at P1, P2 and P3' and a small residue at P1' in substrates of 5 to 15 residues.. Functionally, involved in cytoplasmic peptide degradation. The protein is Probable thimet oligopeptidase of Arabidopsis thaliana (Mouse-ear cress).